A 717-amino-acid chain; its full sequence is F-box only protein 42 (717 aa).

Residues 1–30 (MASSSDSEDDSFMAVDQEETVLEGTMDQDE) are compositionally biased toward acidic residues. Residues 1–34 (MASSSDSEDDSFMAVDQEETVLEGTMDQDEEPHP) form a disordered region. In terms of domain architecture, F-box spans 44–93 (NRSMSELPEEVLEYILSFLSPYQEHKTAALVCKQWYRLIKGVAHQCYHGF). 4 Kelch repeats span residues 132 to 184 (SMYV…VYKD), 186 to 242 (LVLF…VIDD), 244 to 293 (MIVF…VIDD), and 295 to 342 (TILI…LWCH). A disordered region spans residues 361–474 (RAPLSPSLNS…PSTPSAPEGY (114 aa)). Over residues 363–376 (PLSPSLNSRPSPIS) the composition is skewed to low complexity. Ser-365 and Ser-373 each carry phosphoserine. Thr-378 is subject to Phosphothreonine. Composition is skewed to polar residues over residues 416-426 (QRQTPSGSREG) and 455-469 (SLDS…STPS). Ser-552 carries the phosphoserine modification. The span at 570–596 (GPSASAALSPPLGSSPGSPGSQSLSSG) shows a compositional bias: low complexity. The segment at 570 to 631 (GPSASAALSP…GHHPPQSLNV (62 aa)) is disordered.

Component of some SCF complex, composed of CUL1, SKP1, RBX1 and FBXO42. Interacts (via the kelch domain) with p53/TP53; interaction is direct.

Functionally, substrate-recognition component of some SCF (SKP1-CUL1-F-box protein)-type E3 ubiquitin ligase complex. Specifically recognizes p53/TP53, promoting its ubiquitination and degradation. This chain is F-box only protein 42 (FBXO42), found in Homo sapiens (Human).